Here is a 37-residue protein sequence, read N- to C-terminus: Cytochrome b6-f complex subunit 5 (37 aa).

Residues 5–25 (FLLGIILGLIPITLIGLFVTA) form a helical membrane-spanning segment.

It belongs to the PetG family. The 4 large subunits of the cytochrome b6-f complex are cytochrome b6, subunit IV (17 kDa polypeptide, PetD), cytochrome f and the Rieske protein, while the 4 small subunits are PetG, PetL, PetM and PetN. The complex functions as a dimer.

Its subcellular location is the plastid membrane. Functionally, component of the cytochrome b6-f complex, which mediates electron transfer between photosystem II (PSII) and photosystem I (PSI), cyclic electron flow around PSI, and state transitions. PetG is required for either the stability or assembly of the cytochrome b6-f complex. The sequence is that of Cytochrome b6-f complex subunit 5 from Cuscuta obtusiflora (Peruvian dodder).